We begin with the raw amino-acid sequence, 293 residues long: Pyridoxal 5'-phosphate synthase subunit PdxS (293 aa).

D23 contacts D-ribose 5-phosphate. Residue K80 is the Schiff-base intermediate with D-ribose 5-phosphate of the active site. Residue G152 coordinates D-ribose 5-phosphate. Position 164 (R164) interacts with D-glyceraldehyde 3-phosphate. D-ribose 5-phosphate is bound by residues G213 and 234–235 (GS).

This sequence belongs to the PdxS/SNZ family. In the presence of PdxT, forms a dodecamer of heterodimers.

It carries out the reaction aldehydo-D-ribose 5-phosphate + D-glyceraldehyde 3-phosphate + L-glutamine = pyridoxal 5'-phosphate + L-glutamate + phosphate + 3 H2O + H(+). It functions in the pathway cofactor biosynthesis; pyridoxal 5'-phosphate biosynthesis. Its function is as follows. Catalyzes the formation of pyridoxal 5'-phosphate from ribose 5-phosphate (RBP), glyceraldehyde 3-phosphate (G3P) and ammonia. The ammonia is provided by the PdxT subunit. Can also use ribulose 5-phosphate and dihydroxyacetone phosphate as substrates, resulting from enzyme-catalyzed isomerization of RBP and G3P, respectively. In Herpetosiphon aurantiacus (strain ATCC 23779 / DSM 785 / 114-95), this protein is Pyridoxal 5'-phosphate synthase subunit PdxS.